The following is a 207-amino-acid chain: Arginine exporter protein ArgO (207 aa).

6 helical membrane-spanning segments follow: residues 1–21, 42–62, 67–87, 111–131, 150–170, and 185–205; these read MLST…PLGP, LCAI…SALL, LLLQ…GWGA, VVAI…DTIV, FGAA…AAWF, and GFIC…GLLI.

The protein belongs to the LysE/ArgO transporter (TC 2.A.75) family.

It is found in the cell inner membrane. The enzyme catalyses L-arginine(in) = L-arginine(out). Functionally, involved in the export of arginine. Important to control the intracellular level of arginine and the correct balance between arginine and lysine. This Photorhabdus laumondii subsp. laumondii (strain DSM 15139 / CIP 105565 / TT01) (Photorhabdus luminescens subsp. laumondii) protein is Arginine exporter protein ArgO.